Consider the following 203-residue polypeptide: Inactive ribonuclease-like protein 9 (203 aa).

Residues 1-25 form the signal peptide; the sequence is MRTPITTHSLLLLLLLQQLLQPVQL. Intrachain disulfides connect C96-C151, C114-C166, and C121-C128. 2 N-linked (GlcNAc...) asparagine glycosylation sites follow: N129 and N141.

The protein belongs to the pancreatic ribonuclease family.

The protein localises to the secreted. Functionally, does not exhibit any ribonuclease activity. The polypeptide is Inactive ribonuclease-like protein 9 (RNASE9) (Macaca assamensis (Assam macaque)).